A 150-amino-acid chain; its full sequence is MKLILTAAIDNLGVPGDIVEVKAGYGRNYLLPRGYAVPATRGAEKQVQDLKRAQEARAIRDADRAREVKEQLANLEGVSVAVRTANNGKLFGSVKPNDVAQAVVAAGGPELDKHSIDMTKGFVKSTGKYSVDVKLHEDIHGTINFEVVSQ.

This sequence belongs to the bacterial ribosomal protein bL9 family.

Binds to the 23S rRNA. The polypeptide is Large ribosomal subunit protein bL9 (Corynebacterium kroppenstedtii (strain DSM 44385 / JCM 11950 / CIP 105744 / CCUG 35717)).